A 453-amino-acid chain; its full sequence is Sodium/alanine symporter AgcS (453 aa).

The Extracellular portion of the chain corresponds to 1-17; the sequence is MDFVSLVNTVNSFVWGP. A helical membrane pass occupies residues 18–32; that stretch reads YMLVLLLGTGIFLTL. Residues 33–67 are Cytoplasmic-facing; sequence RLGFMQIHTLPYALKLAFSKHQDETSEGDISHFQA. The chain crosses the membrane as a helical span at residues 68-89; that stretch reads LMTALAATIGTGNIAGVATAYV. Residue T75 participates in D-alanine binding. Positions 75 and 79 each coordinate L-alanine. N80 provides a ligand contact to D-alanine. Residues 90-92 lie on the Extracellular side of the membrane; it reads LGG. The helical transmembrane segment at 93-111 threads the bilayer; it reads PGAIFWMWVTAFFGMATKY. Residues 112 to 148 lie on the Cytoplasmic side of the membrane; the sequence is AEAVLAIKYRTVDDNGEMAGGPMYFLEKGLPDHGLGK. A helical membrane pass occupies residues 149-179; that stretch reads ILGVAFAFFGAFAAFGIGNMVQTNSVADAVA. A D-alanine-binding site is contributed by Q170. Q170 provides a ligand contact to L-alanine. Over 180–186 the chain is Extracellular; the sequence is SNFGVDP. Residues 187–202 form a helical membrane-spanning segment; sequence LITGFVLAIFTAAVIL. Topologically, residues 203–206 are cytoplasmic; it reads GGIK. The helical transmembrane segment at 207–233 threads the bilayer; it reads SIGKATGIIVPFMAVFYILAGLVILAM. Residues 234–258 lie on the Extracellular side of the membrane; that stretch reads NIGYIIPAFGTIFSSAFNFSAGFGA. The chain crosses the membrane as a helical span at residues 259–274; the sequence is LIGTAIMWGVKRGVFS. Residue 273-274 participates in D-alanine binding; it reads FS. An L-alanine-binding site is contributed by 273 to 276; the sequence is FSNE. At 275–300 the chain is on the cytoplasmic side; it reads NEAGLGSAPIAAAAAKTDHPGRQALV. The chain crosses the membrane as a helical span at residues 301-322; the sequence is SMTGTFLDTIVVCTITGLVLTI. Residues 323 to 350 are Extracellular-facing; the sequence is AGLKAFPGLTDLTGASLTAASFDALMPM. Residues 351–378 traverse the membrane as a helical segment; it reads GGLIVTIGLVFFAYSTVLGWSYYGEKCF. Over 379-386 the chain is Cytoplasmic; sequence EYLIGTKG. The chain crosses the membrane as a helical span at residues 387 to 403; it reads IRLYRIAFVLVAFWGAT. The Extracellular portion of the chain corresponds to 404-408; sequence ASLPL. A helical transmembrane segment spans residues 409–430; it reads VWNIADTLNGAMAIPNLIGLLL. Residues 431–453 are Cytoplasmic-facing; sequence LSGVVVSETKAFNEIRKNEAKNA.

This sequence belongs to the alanine or glycine:cation symporter (AGCS) (TC 2.A.25) family.

It localises to the cell membrane. It carries out the reaction D-alanine(in) + Na(+)(in) = D-alanine(out) + Na(+)(out). The enzyme catalyses L-alanine(in) + Na(+)(in) = L-alanine(out) + Na(+)(out). The catalysed reaction is glycine(in) + Na(+)(in) = glycine(out) + Na(+)(out). Catalyzes the sodium-dependent uptake of extracellular D-alanine and L-alanine. Can also transport glycine. Binds glycine and both enantiomers of alanine, while strictly excluding other amino acids. The sequence is that of Sodium/alanine symporter AgcS from Methanococcus maripaludis (strain DSM 14266 / JCM 13030 / NBRC 101832 / S2 / LL).